The following is a 216-amino-acid chain: Transmembrane emp24 domain-containing protein eca (216 aa).

Positions 1–20 (MRDQFISLALILCVLHSACG) are cleaved as a signal peptide. Residues 21–182 (LYFHISETER…FRHTSESTNS (162 aa)) lie on the Lumenal side of the membrane. The GOLD domain occupies 30–126 (RKCFIEEVPD…QLRVHLDIQV (97 aa)). Positions 134 to 164 (ANVAQKEKLTELQLRIRQLLDQVEQITKEQN) form a coiled coil. A helical membrane pass occupies residues 183 to 203 (RVLWWSLAQTVVLVCMGFWQM). Topologically, residues 204-216 (RHLKSFFEAKKLV) are cytoplasmic. The Prevents secretion from ER motif lies at 213–216 (KKLV).

This sequence belongs to the EMP24/GP25L family.

The protein resides in the endoplasmic reticulum membrane. Functionally, eca and bai are essential, though not redundant, for dorsoventral patterning of the embryo. Specifically required during early embryogenesis for the activity of maternal tkv, while the zygotic tkv is not affected. Involved in Golgi organization. This chain is Transmembrane emp24 domain-containing protein eca, found in Drosophila simulans (Fruit fly).